The chain runs to 239 residues: Probable transcriptional regulatory protein BAA_0622 (239 aa).

Belongs to the TACO1 family. YeeN subfamily.

Its subcellular location is the cytoplasm. The protein is Probable transcriptional regulatory protein BAA_0622 of Bacillus anthracis (strain A0248).